A 408-amino-acid chain; its full sequence is LL-diaminopimelate aminotransferase (408 aa).

Residues Y15 and G42 each contribute to the substrate site. Residues Y72, 108–109 (SK), Y132, N187, Y218, and 246–248 (SFS) each bind pyridoxal 5'-phosphate. Residues K109, Y132, and N187 each coordinate substrate. At K249 the chain carries N6-(pyridoxal phosphate)lysine. Pyridoxal 5'-phosphate-binding residues include R257 and N292. Residues N292 and R388 each coordinate substrate.

This sequence belongs to the class-I pyridoxal-phosphate-dependent aminotransferase family. LL-diaminopimelate aminotransferase subfamily. As to quaternary structure, homodimer. Pyridoxal 5'-phosphate is required as a cofactor.

It catalyses the reaction (2S,6S)-2,6-diaminopimelate + 2-oxoglutarate = (S)-2,3,4,5-tetrahydrodipicolinate + L-glutamate + H2O + H(+). It functions in the pathway amino-acid biosynthesis; L-lysine biosynthesis via DAP pathway; LL-2,6-diaminopimelate from (S)-tetrahydrodipicolinate (aminotransferase route): step 1/1. In terms of biological role, involved in the synthesis of meso-diaminopimelate (m-DAP or DL-DAP), required for both lysine and peptidoglycan biosynthesis. Catalyzes the direct conversion of tetrahydrodipicolinate to LL-diaminopimelate. This chain is LL-diaminopimelate aminotransferase, found in Leptospira biflexa serovar Patoc (strain Patoc 1 / Ames).